The sequence spans 562 residues: Arginine--tRNA ligase (562 aa).

Positions 122 to 132 match the 'HIGH' region motif; the sequence is PNIAKDMHVGH.

The protein belongs to the class-I aminoacyl-tRNA synthetase family. As to quaternary structure, monomer.

Its subcellular location is the cytoplasm. It catalyses the reaction tRNA(Arg) + L-arginine + ATP = L-arginyl-tRNA(Arg) + AMP + diphosphate. This chain is Arginine--tRNA ligase, found in Chlamydia felis (strain Fe/C-56) (Chlamydophila felis).